The primary structure comprises 227 residues: Thymidylate kinase (227 aa).

Residue 7–14 participates in ATP binding; it reads GIEGSGKT.

Belongs to the thymidylate kinase family.

It catalyses the reaction dTMP + ATP = dTDP + ADP. Its function is as follows. Phosphorylation of dTMP to form dTDP in both de novo and salvage pathways of dTTP synthesis. This is Thymidylate kinase from Desulforapulum autotrophicum (strain ATCC 43914 / DSM 3382 / VKM B-1955 / HRM2) (Desulfobacterium autotrophicum).